The primary structure comprises 355 residues: UPF0421 protein BCE_2776 (355 aa).

Transmembrane regions (helical) follow at residues 19-39 (IAVFLTVLVCEFFNIPTIFAV), 74-94 (FTFFLGHQALSYALAAMFTIV), 109-129 (TLTAVAMIPITADHYFTAFLI), and 131-151 (LATTSTGIIVSTLVNFFILPP).

Belongs to the UPF0421 family.

Its subcellular location is the cell membrane. The chain is UPF0421 protein BCE_2776 from Bacillus cereus (strain ATCC 10987 / NRS 248).